Consider the following 898-residue polypeptide: Dipeptidyl peptidase 8 (898 aa).

Residues Ser-755, Asp-833, and His-865 each act as charge relay system in the active site.

It belongs to the peptidase S9B family. DPPIV subfamily. In terms of assembly, homodimer. Forms a ternary complex with NLRP1, composed of a DPP8 homodimer, one full-length NLRP1 protein, and one cleaved C-terminus of NLRP1 (NACHT, LRR and PYD domains-containing protein 1, C-terminus). Forms a ternary complex with CARD8, composed of a DPP8 homodimer, one full-length NLRP1 protein, and one cleaved C-terminus of CARD8 (Caspase recruitment domain-containing protein 8, C-terminus). In the ternary complex, only one subunit of the DPP8 homodimer is bound to NLRP1 or CARD8. Ubiquitously expressed, with highest levels in testis, placenta, prostate, muscle and brain.

It localises to the cytoplasm. The enzyme catalyses Release of an N-terminal dipeptide, Xaa-Yaa-|-Zaa-, from a polypeptide, preferentially when Yaa is Pro, provided Zaa is neither Pro nor hydroxyproline.. With respect to regulation, inhibited by zinc. Inhibited by the serine proteinase inhibitor 4-(2-aminoethyl)benzenesulphonyl fluoride (AEBSF), and by di-isopropylfluorophosphate. Specifically inhibited by isoindoline derivatives. Inhibited by Val-boroPro (Talabostat, PT-100), a non-selective inhibitor, which triggers pyroptosis in monocytes and macrophages. Dipeptidyl peptidase that cleaves off N-terminal dipeptides from proteins having a Pro or Ala residue at position 2. Acts as a key inhibitor of caspase-1-dependent monocyte and macrophage pyroptosis in resting cells by preventing activation of NLRP1 and CARD8. Sequesters the cleaved C-terminal part of NLRP1 and CARD8, which respectively constitute the active part of the NLRP1 and CARD8 inflammasomes, in a ternary complex, thereby preventing their oligomerization and activation. The dipeptidyl peptidase activity is required to suppress NLRP1 and CARD8; however, neither NLRP1 nor CARD8 are bona fide substrates of DPP8, suggesting the existence of substrate(s) required for NLRP1 and CARD8 inhibition. This is Dipeptidyl peptidase 8 from Homo sapiens (Human).